Here is a 36-residue protein sequence, read N- to C-terminus: Pancreatic polypeptide (36 aa).

A Tyrosine amide modification is found at Tyr-36.

The protein belongs to the NPY family.

The protein localises to the secreted. Its function is as follows. Hormone secreted by pancreatic cells that acts as a regulator of pancreatic and gastrointestinal functions. The sequence is that of Pancreatic polypeptide (PPY) from Meleagris gallopavo (Wild turkey).